Here is a 787-residue protein sequence, read N- to C-terminus: Endonuclease MutS2 (787 aa).

331 to 338 lines the ATP pocket; that stretch reads GPNTGGKT. The 76-residue stretch at 711 to 786 folds into the Smr domain; sequence IDVRGKTSDD…EQGVTVVELK (76 aa).

It belongs to the DNA mismatch repair MutS family. MutS2 subfamily. As to quaternary structure, homodimer. Binds to stalled ribosomes, contacting rRNA.

In terms of biological role, endonuclease that is involved in the suppression of homologous recombination and thus may have a key role in the control of bacterial genetic diversity. Acts as a ribosome collision sensor, splitting the ribosome into its 2 subunits. Detects stalled/collided 70S ribosomes which it binds and splits by an ATP-hydrolysis driven conformational change. Acts upstream of the ribosome quality control system (RQC), a ribosome-associated complex that mediates the extraction of incompletely synthesized nascent chains from stalled ribosomes and their subsequent degradation. Probably generates substrates for RQC. This chain is Endonuclease MutS2, found in Caldicellulosiruptor bescii (strain ATCC BAA-1888 / DSM 6725 / KCTC 15123 / Z-1320) (Anaerocellum thermophilum).